We begin with the raw amino-acid sequence, 391 residues long: Heme A synthase (391 aa).

Helical transmembrane passes span 37–57 (IRLW…VGGL), 121–141 (RQLG…FLAA), 152–172 (LLAL…MVAS), 186–206 (LATH…QALL), 229–249 (TTVL…VAGI), 298–318 (FLHR…WIFG), 332–352 (LLAM…LSAA), and 354–374 (WQVA…ILHA). Histidine 300 is a heme binding site. Histidine 360 provides a ligand contact to heme.

It belongs to the COX15/CtaA family. Type 2 subfamily. In terms of assembly, interacts with CtaB. The cofactor is heme b.

The protein localises to the cell membrane. The enzyme catalyses Fe(II)-heme o + 2 A + H2O = Fe(II)-heme a + 2 AH2. It functions in the pathway porphyrin-containing compound metabolism; heme A biosynthesis; heme A from heme O: step 1/1. Functionally, catalyzes the conversion of heme O to heme A by two successive hydroxylations of the methyl group at C8. The first hydroxylation forms heme I, the second hydroxylation results in an unstable dihydroxymethyl group, which spontaneously dehydrates, resulting in the formyl group of heme A. In Cereibacter sphaeroides (strain KD131 / KCTC 12085) (Rhodobacter sphaeroides), this protein is Heme A synthase.